A 412-amino-acid chain; its full sequence is Probable ribonuclease FAU-1 (412 aa).

The protein belongs to the FAU-1 family.

In terms of biological role, probable RNase involved in rRNA stability through maturation and/or degradation of precursor rRNAs. Binds to RNA in loop regions with AU-rich sequences. This is Probable ribonuclease FAU-1 from Sulfurisphaera tokodaii (strain DSM 16993 / JCM 10545 / NBRC 100140 / 7) (Sulfolobus tokodaii).